The primary structure comprises 449 residues: Gamma-glutamyl phosphate reductase (449 aa).

This sequence belongs to the gamma-glutamyl phosphate reductase family.

It is found in the cytoplasm. The catalysed reaction is L-glutamate 5-semialdehyde + phosphate + NADP(+) = L-glutamyl 5-phosphate + NADPH + H(+). It functions in the pathway amino-acid biosynthesis; L-proline biosynthesis; L-glutamate 5-semialdehyde from L-glutamate: step 2/2. In terms of biological role, catalyzes the NADPH-dependent reduction of L-glutamate 5-phosphate into L-glutamate 5-semialdehyde and phosphate. The product spontaneously undergoes cyclization to form 1-pyrroline-5-carboxylate. The chain is Gamma-glutamyl phosphate reductase from Methanococcoides burtonii (strain DSM 6242 / NBRC 107633 / OCM 468 / ACE-M).